An 874-amino-acid polypeptide reads, in one-letter code: Speckle targeted PIP5K1A-regulated poly(A) polymerase (874 aa).

The segment at 16-46 (FRCCLCHVTTANRPSLDAHLGGRKHRHLVEL) adopts a Matrin-type zinc-finger fold. One can recognise an RRM domain in the interval 56–128 (RSVFVSGFPR…HRLRVRPREQ (73 aa)). Residues 113-146 (QHSLGGHRLRVRPREQKEFQSPASKSPKGAAPDS) are disordered. Ser-205 is an ATP binding site. Residues Asp-216 and Asp-218 each contribute to the Mg(2+) site. UTP is bound by residues Asp-216 and Asp-218. Positions 252-334 (QALACTPASP…ELAETPKEEK (83 aa)) are disordered. The span at 259–269 (ASPPDSQPPAS) shows a compositional bias: pro residues. Over residues 280 to 291 (TPSSSLAPQTPD) the composition is skewed to polar residues. An ATP-binding site is contributed by Asn-392. Residues Asn-392, Arg-414, Tyr-432, and His-549 each coordinate UTP. A PAP-associated domain is found at 491–549 (LSSLLAQFFSCVSCWDLRGSLLSLREGQALPVAGGLPSNLWEGLRLGPLNLQDPFDLSH). The interval 598–874 (SSPSSLLSAT…FLPQAIRHLK (277 aa)) is KA1; binds the bulging loops of U6 snRNA but is dispensable for terminal uridylyltransferase activity. 2 disordered regions span residues 638–662 (ATKR…KRLK) and 705–761 (MQSP…ASLP). Ser-750 carries the phosphoserine modification.

The protein belongs to the DNA polymerase type-B-like family. In terms of assembly, associates with the cleavage and polyadenylation specificity factor (CPSF) complex. Interacts with CPSF1 and CPSF3; the interaction is direct. Interacts with PIP5K1A. The cofactor is Mg(2+). It depends on Mn(2+) as a cofactor. In terms of processing, phosphorylated by CK1 in the proline-rich (Pro-rich) region. In terms of tissue distribution, widely expressed.

It is found in the nucleus. The protein localises to the nucleolus. Its subcellular location is the nucleus speckle. The enzyme catalyses RNA(n) + UTP = RNA(n)-3'-uridine ribonucleotide + diphosphate. It catalyses the reaction RNA(n) + ATP = RNA(n)-3'-adenine ribonucleotide + diphosphate. With respect to regulation, adenylyltransferase activity is specifically phosphatidylinositol 4,5-bisphosphate (PtdIns(4,5)P2). Poly(A) polymerase that creates the 3'-poly(A) tail of specific pre-mRNAs. Localizes to nuclear speckles together with PIP5K1A and mediates polyadenylation of a select set of mRNAs, such as HMOX1. In addition to polyadenylation, it is also required for the 3'-end cleavage of pre-mRNAs: binds to the 3'UTR of targeted pre-mRNAs and promotes the recruitment and assembly of the CPSF complex on the 3'UTR of pre-mRNAs. In addition to adenylyltransferase activity, also has uridylyltransferase activity. However, the ATP ratio is higher than UTP in cells, suggesting that it functions primarily as a poly(A) polymerase. Acts as a specific terminal uridylyltransferase for U6 snRNA in vitro: responsible for a controlled elongation reaction that results in the restoration of the four 3'-terminal UMP-residues found in newly transcribed U6 snRNA. Not involved in replication-dependent histone mRNA degradation. This Homo sapiens (Human) protein is Speckle targeted PIP5K1A-regulated poly(A) polymerase (TUT1).